The primary structure comprises 385 residues: MKIHEYQAKALFRTFGVPVPDGGVAFSVEEAVDVARGLGGYPVVVKAQIHAGGRGKGGGVKLAASEEEARRFAGEILGMTLVTHQTGPQGREVKKLLVEAGQKIAKELYLSILVDRATAGIVIMASQEGGMDIETVAAKTPEKIIKVRVDPLTGIQGYYLRQVGFGLGLPKAALKEFSALLKNLYTLFVKNDCSLLEINPLILTSDDRVMALDAKVDIDSNALFRHKDLVELRDLDEEDPLEVEASKFNLNYINLDGNVGNIVNGAGLAMATMDIIKNAGAEPANFMDVGGGATAEMVENAFSIILRDKKVKAVLINIFGGILRCDVFAEGIVTAAKKSGITIPVVVRMEGTNVERGKEILAQSGLNLINAVNLKDAAEKVAAAI.

The ATP-grasp domain maps to 9 to 244; sequence KALFRTFGVP…LDEEDPLEVE (236 aa). ATP is bound by residues Lys-46, 53–55, Glu-99, Gln-102, and Glu-107; that span reads GRG. Mg(2+) contacts are provided by Asn-199 and Asp-213. Substrate-binding positions include Asn-264 and 321–323; that span reads GIL.

Belongs to the succinate/malate CoA ligase beta subunit family. Heterotetramer of two alpha and two beta subunits. Requires Mg(2+) as cofactor.

It catalyses the reaction succinate + ATP + CoA = succinyl-CoA + ADP + phosphate. The catalysed reaction is GTP + succinate + CoA = succinyl-CoA + GDP + phosphate. It participates in carbohydrate metabolism; tricarboxylic acid cycle; succinate from succinyl-CoA (ligase route): step 1/1. In terms of biological role, succinyl-CoA synthetase functions in the citric acid cycle (TCA), coupling the hydrolysis of succinyl-CoA to the synthesis of either ATP or GTP and thus represents the only step of substrate-level phosphorylation in the TCA. The beta subunit provides nucleotide specificity of the enzyme and binds the substrate succinate, while the binding sites for coenzyme A and phosphate are found in the alpha subunit. The polypeptide is Succinate--CoA ligase [ADP-forming] subunit beta (Desulforapulum autotrophicum (strain ATCC 43914 / DSM 3382 / VKM B-1955 / HRM2) (Desulfobacterium autotrophicum)).